The primary structure comprises 1315 residues: Serine/threonine-protein kinase 36 (1315 aa).

The 251-residue stretch at 4 to 254 folds into the Protein kinase domain; that stretch reads YHVLEMIGEG…WPDLLYHPFI (251 aa). Residues 10–18 and K33 each bind ATP; that span reads IGEGSFGRV. Residue D125 is the Proton acceptor of the active site. Disordered regions lie at residues 312–345 and 365–405; these read EAMQKKHQNTGPALEQEDKTSKVAPGTAPLPRLG and SWAE…RSTD. The span at 379–397 shows a compositional bias: basic and acidic residues; sequence RENRTTPDCERAFPEERPE.

Belongs to the protein kinase superfamily. Ser/Thr protein kinase family. As to quaternary structure, interacts with SPAG16 and KIF27. Mg(2+) serves as cofactor.

Its subcellular location is the cytoplasm. It is found in the nucleus. The protein resides in the cytoskeleton. It localises to the cilium axoneme. The enzyme catalyses L-seryl-[protein] + ATP = O-phospho-L-seryl-[protein] + ADP + H(+). It carries out the reaction L-threonyl-[protein] + ATP = O-phospho-L-threonyl-[protein] + ADP + H(+). Serine/threonine protein kinase which plays an important role in the sonic hedgehog (Shh) pathway by regulating the activity of GLI transcription factors. Controls the activity of the transcriptional regulators GLI1, GLI2 and GLI3 by opposing the effect of SUFU and promoting their nuclear localization. GLI2 requires an additional function of STK36 to become transcriptionally active, but the enzyme does not need to possess an active kinase catalytic site for this to occur. Required for postnatal development, possibly by regulating the homeostasis of cerebral spinal fluid or ciliary function. Essential for construction of the central pair apparatus of motile cilia. The sequence is that of Serine/threonine-protein kinase 36 from Pongo abelii (Sumatran orangutan).